The primary structure comprises 431 residues: Enolase (431 aa).

A disordered region spans residues 27 to 47 (LESGHSGRAAVPSGASTGSRE). A (2R)-2-phosphoglycerate-binding site is contributed by glutamine 163. Glutamate 205 acts as the Proton donor in catalysis. Positions 242, 285, and 312 each coordinate Mg(2+). Residues lysine 337, arginine 366, serine 367, and lysine 388 each coordinate (2R)-2-phosphoglycerate. The active-site Proton acceptor is lysine 337.

The protein belongs to the enolase family. Mg(2+) serves as cofactor.

Its subcellular location is the cytoplasm. The protein resides in the secreted. The protein localises to the cell surface. The enzyme catalyses (2R)-2-phosphoglycerate = phosphoenolpyruvate + H2O. It participates in carbohydrate degradation; glycolysis; pyruvate from D-glyceraldehyde 3-phosphate: step 4/5. Functionally, catalyzes the reversible conversion of 2-phosphoglycerate (2-PG) into phosphoenolpyruvate (PEP). It is essential for the degradation of carbohydrates via glycolysis. The protein is Enolase of Oleidesulfovibrio alaskensis (strain ATCC BAA-1058 / DSM 17464 / G20) (Desulfovibrio alaskensis).